The primary structure comprises 92 residues: Small ribosomal subunit protein uS17 (92 aa).

The protein belongs to the universal ribosomal protein uS17 family. In terms of assembly, part of the 30S ribosomal subunit.

In terms of biological role, one of the primary rRNA binding proteins, it binds specifically to the 5'-end of 16S ribosomal RNA. In Bordetella petrii (strain ATCC BAA-461 / DSM 12804 / CCUG 43448), this protein is Small ribosomal subunit protein uS17.